Consider the following 141-residue polypeptide: MDSDDNRTLSYEVVDHESDIGVIVYGKTYEELFSNAVYAMADLIVDVSRLKENRKMHEVITGKTPEDIMVNLLSRVLFYLDTYYILYYRITSKYSDGELDAYFYGSEIPEGIEYRNVIKAVTYSDLAVKPEEGYAKIIFDL.

The Ca(2+) site is built by Asp19 and Asp140.

It belongs to the archease family.

In terms of biological role, activates the tRNA-splicing ligase complex by facilitating the enzymatic turnover of catalytic subunit RtcB. Acts by promoting the guanylylation of RtcB, a key intermediate step in tRNA ligation. Can also alter the NTP specificity of RtcB such that ATP, dGTP or ITP is used efficiently. This is Protein archease from Thermoplasma acidophilum (strain ATCC 25905 / DSM 1728 / JCM 9062 / NBRC 15155 / AMRC-C165).